The sequence spans 91 residues: Molybdopterin synthase sulfur carrier subunit (91 aa).

Glycine 91 is subject to 1-thioglycine; alternate. Glycine 91 is modified (glycyl adenylate; alternate).

It belongs to the MoaD family. MOCS2A subfamily. As to quaternary structure, heterotetramer; composed of 2 small (MOCS2A) and 2 large (MOCS2B) subunits. In terms of processing, C-terminal thiocarboxylation occurs in 2 steps, it is first acyl-adenylated (-COAMP) via the hesA/moeB/thiF part of uba4, then thiocarboxylated (-COSH) via the rhodanese domain of uba4.

Its subcellular location is the cytoplasm. It participates in cofactor biosynthesis; molybdopterin biosynthesis. Functionally, acts as a sulfur carrier required for molybdopterin biosynthesis. Component of the molybdopterin synthase complex that catalyzes the conversion of precursor Z into molybdopterin by mediating the incorporation of 2 sulfur atoms into precursor Z to generate a dithiolene group. In the complex, serves as sulfur donor by being thiocarboxylated (-COSH) at its C-terminus by uba4. After interaction with MOCS2B, the sulfur is then transferred to precursor Z to form molybdopterin. The protein is Molybdopterin synthase sulfur carrier subunit of Emericella nidulans (strain FGSC A4 / ATCC 38163 / CBS 112.46 / NRRL 194 / M139) (Aspergillus nidulans).